A 174-amino-acid chain; its full sequence is DNA replication inhibitor plutonium (174 aa).

ANK repeat units lie at residues 39 to 68 (YGNTALLKACYLGRFECARTLLEFGANIFA) and 72 to 103 (FGQNALTLATYAGHLTLVKELLRRRSYKDFNL). Thr167 is modified (phosphothreonine).

In terms of biological role, inhibits DNA replication early in developments. May bind and block the action of a replication or initiation factor. This chain is DNA replication inhibitor plutonium (plu), found in Drosophila melanogaster (Fruit fly).